Here is a 307-residue protein sequence, read N- to C-terminus: Taste receptor type 2 member 41 (307 aa).

At 1–7 (MQAALTA) the chain is on the extracellular side. The chain crosses the membrane as a helical span at residues 8–28 (FFMLLFSLLSLLGIAANGFIV). The Cytoplasmic segment spans residues 29 to 40 (LVLGREWLRYGR). A helical transmembrane segment spans residues 41–61 (LLPLDMILISLGASRFCLQLV). Over 62–88 (GTVHNFYYSAQKVEYSGGLGRQFFHLH) the chain is Extracellular. A helical transmembrane segment spans residues 89–109 (WHFLNSATFWFCSWLSVLFCV). Over 110-129 (KIANITHPTFLWLKWRFPAW) the chain is Cytoplasmic. The helical transmembrane segment at 130–150 (VPWLLLGSVLISFIITLLFFW) threads the bilayer. At 151-183 (VNYPAYQEFLIRKFSVNMTYKWNTRIETYYFPS) the chain is on the extracellular side. Residue Asn167 is glycosylated (N-linked (GlcNAc...) asparagine). A helical membrane pass occupies residues 184–204 (LKLVIWSIPFSVFLVSIMLLI). At 205–234 (NSLRRHTQRMQHNGHSLQDPSTQAHTRALK) the chain is on the cytoplasmic side. Residues 235–255 (SLISFLILYALSFLSLIIDAT) form a helical membrane-spanning segment. The Extracellular portion of the chain corresponds to 256 to 264 (KFISMQNDF). A helical membrane pass occupies residues 265 to 285 (YWPWQIAVYLCISIHPFILIF). At 286 to 307 (SNLKLRSVFSQLLLLARGFWVA) the chain is on the cytoplasmic side.

Belongs to the G-protein coupled receptor T2R family.

The protein localises to the membrane. Functionally, receptor that may play a role in the perception of bitterness and is gustducin-linked. May play a role in sensing the chemical composition of the gastrointestinal content. The activity of this receptor may stimulate alpha gustducin, mediate PLC-beta-2 activation and lead to the gating of TRPM5. The polypeptide is Taste receptor type 2 member 41 (TAS2R41) (Pan paniscus (Pygmy chimpanzee)).